Consider the following 734-residue polypeptide: Photosystem I P700 chlorophyll a apoprotein A2 (734 aa).

8 consecutive transmembrane segments (helical) span residues 46-69 (IFAS…FHVA), 135-158 (LYTG…LHLQ), 175-199 (LNHH…HVAI), 273-291 (IAHH…GHMY), 330-353 (LHFQ…QHMY), 369-395 (AALY…IFFI), 417-439 (AIIS…LYVH), and 517-535 (FLVH…LILV). The [4Fe-4S] cluster site is built by Cys-559 and Cys-568. 2 consecutive transmembrane segments (helical) span residues 575–596 (AFYL…YWHW) and 643–665 (LSVW…MFLI). Residues His-654, Met-662, and Tyr-670 each coordinate chlorophyll a. Trp-671 provides a ligand contact to phylloquinone. The helical transmembrane segment at 707–727 (LVGLAHFSVGYIFTYAAFLIA) threads the bilayer.

Belongs to the PsaA/PsaB family. As to quaternary structure, the PsaA/B heterodimer binds the P700 chlorophyll special pair and subsequent electron acceptors. PSI consists of a core antenna complex that captures photons, and an electron transfer chain that converts photonic excitation into a charge separation. The eukaryotic PSI reaction center is composed of at least 11 subunits. Requires P700 is a chlorophyll a/chlorophyll a' dimer, A0 is one or more chlorophyll a, A1 is one or both phylloquinones and FX is a shared 4Fe-4S iron-sulfur center. as cofactor.

It is found in the plastid. It localises to the chloroplast thylakoid membrane. It catalyses the reaction reduced [plastocyanin] + hnu + oxidized [2Fe-2S]-[ferredoxin] = oxidized [plastocyanin] + reduced [2Fe-2S]-[ferredoxin]. Its function is as follows. PsaA and PsaB bind P700, the primary electron donor of photosystem I (PSI), as well as the electron acceptors A0, A1 and FX. PSI is a plastocyanin-ferredoxin oxidoreductase, converting photonic excitation into a charge separation, which transfers an electron from the donor P700 chlorophyll pair to the spectroscopically characterized acceptors A0, A1, FX, FA and FB in turn. Oxidized P700 is reduced on the lumenal side of the thylakoid membrane by plastocyanin. This is Photosystem I P700 chlorophyll a apoprotein A2 from Citrus sinensis (Sweet orange).